The primary structure comprises 328 residues: Diaminopimelate epimerase (328 aa).

Substrate is bound by residues asparagine 14 and asparagine 73. The Proton donor role is filled by cysteine 82. Residues 83–84, asparagine 170, asparagine 206, and 224–225 each bind substrate; these read GN and ER. Catalysis depends on cysteine 233, which acts as the Proton acceptor. 234 to 235 is a substrate binding site; that stretch reads GT.

It belongs to the diaminopimelate epimerase family. In terms of assembly, homodimer.

Its subcellular location is the cytoplasm. The enzyme catalyses (2S,6S)-2,6-diaminopimelate = meso-2,6-diaminopimelate. It participates in amino-acid biosynthesis; L-lysine biosynthesis via DAP pathway; DL-2,6-diaminopimelate from LL-2,6-diaminopimelate: step 1/1. Its function is as follows. Catalyzes the stereoinversion of LL-2,6-diaminopimelate (L,L-DAP) to meso-diaminopimelate (meso-DAP), a precursor of L-lysine and an essential component of the bacterial peptidoglycan. The polypeptide is Diaminopimelate epimerase (Listeria welshimeri serovar 6b (strain ATCC 35897 / DSM 20650 / CCUG 15529 / CIP 8149 / NCTC 11857 / SLCC 5334 / V8)).